The chain runs to 327 residues: Cyclic AMP-responsive element-binding protein 1 (327 aa).

Disordered regions lie at residues 1-27 (MTME…QMTV) and 94-113 (SEDS…RREI). In terms of domain architecture, KID spans 87–146 (QISTIAESEDSQESVDSVTDSQKRREILSRRPSYRKILNDLSSDAPGVPRIEEEKSEEET). Serine 119 is modified (phosphoserine; by CaMK1, CaMK2, CaMK4, PKB/AKT1 or PKB/AKT2, RPS6KA3, RPS6KA4, RPS6KA5 and SGK1). A Glycyl lysine isopeptide (Lys-Gly) (interchain with G-Cter in SUMO2) cross-link involves residue lysine 122. The tract at residues 126 to 151 (DLSSDAPGVPRIEEEKSEEETSAPAI) is disordered. Phosphoserine; by CaMK2 is present on serine 128. Phosphoserine; by HIPK2 is present on serine 257. The bZIP domain occupies 269-327 (ARKREVRLMKNREAARECRRKKKEYVKCLENRVAVLENQNKTLIEELKALKDLYCHKSD). Positions 270–295 (RKREVRLMKNREAARECRRKKKEYVK) are basic motif. Glycyl lysine isopeptide (Lys-Gly) (interchain with G-Cter in SUMO1) cross-links involve residues lysine 271 and lysine 290. The tract at residues 297–318 (LENRVAVLENQNKTLIEELKAL) is leucine-zipper.

The protein belongs to the bZIP family. In terms of assembly, interacts with PPRC1. Binds DNA as a dimer. This dimer is stabilized by magnesium ions. Interacts, through the bZIP domain, with the coactivators CRTC1/TORC1, CRTC2/TORC2 and CRTC3/TORC3. Interacts (phosphorylated form) with TOX3. When phosphorylated on Ser-119, binds CREBBP. Interacts with ARRB1. Binds to HIPK2. Interacts with SGK1. Interacts with CREBL2; regulates CREB1 phosphorylation, stability and transcriptional activity. Interacts with TSSK4; this interaction facilitates phosphorylation on Ser-119. Forms a complex with KMT2A and CREBBP. Interacts with TOX4; CREB1 is required for full induction of TOX4-dependent activity and the interaction is increased by cAMP and inhibited by insulin. Phosphorylation of Ser-119 allows CREBBP binding. Stimulated by phosphorylation. Phosphorylated Ser-128 can be detected in the suprachiasmatic nucleus (SCN), the amygdala, the cortex, and the hippocampus but not in the striatum nor in the cerebellum. In the SCN, phosphorylation of Ser-128 and Ser-119 are stimulated by light exposure and submitted to circadian oscillations. In the retina, only phosphorylation of Ser-119 can be detected upon light exposure. Phosphorylation of both Ser-119 and Ser-128 in the SCN regulates the activity of CREB and participates in circadian rhythm generation. Phosphorylated upon calcium influx by CaMK4 and CaMK2 on Ser-119. CaMK4 is much more potent than CAMK2 in activating CREB. Phosphorylated by CaMK2 on Ser-128. Phosphorylation of Ser-128 blocks CREB-mediated transcription even when Ser-119 is phosphorylated. Phosphorylated by CaMK1. Phosphorylation of Ser-271 by HIPK2 in response to genotoxic stress promotes CREB1 activity, facilitating the recruitment of the coactivator CBP. Phosphorylated at Ser-119 by RPS6KA3, RPS6KA4 and RPS6KA5 in response to mitogenic or stress stimuli. CREBL2 positively regulates phosphorylation at Ser-119 thereby stimulating CREB1 transcriptional activity. In liver, phosphorylation is induced by fasting or glucagon in a circadian fashion. Phosphorylated by TSSK4 on Ser-119. Post-translationally, sumoylated with SUMO1. Sumoylation on Lys-290, but not on Lys-271, is required for nuclear localization of this protein. Sumoylation is enhanced under hypoxia, promoting nuclear localization and stabilization. In terms of tissue distribution, expressed in the heart (at protein level).

It is found in the nucleus. In terms of biological role, phosphorylation-dependent transcription factor that stimulates transcription upon binding to the DNA cAMP response element (CRE), a sequence present in many viral and cellular promoters. Transcription activation is enhanced by the TORC coactivators which act independently of Ser-119 phosphorylation. Involved in different cellular processes including the synchronization of circadian rhythmicity and the differentiation of adipose cells. Regulates the expression of apoptotic and inflammatory response factors in cardiomyocytes in response to ERFE-mediated activation of AKT signaling. The polypeptide is Cyclic AMP-responsive element-binding protein 1 (Creb1) (Mus musculus (Mouse)).